The chain runs to 212 residues: MTQLADLRRSYVLGSLSETDVAPDPMSQFKRWFDEAVTAKLPEPNAMTLATVDADGQPSARIVLLKGIDDRGFTFFTNYESRKGLDLAANPRAALLFHWVQLERQVRVEGRVEKVSDDESDAYFATRPLGSRVGAWASAQSREVPGRDVLEQREQEYRSKFGENPPRPPHWGGYRLVPTALEFWQGRPSRLHDRIAFRLQPGGDWQIVRLSP.

Residues 8–11 (RRSY) and K66 each bind substrate. FMN is bound by residues 61 to 66 (RIVLLK), 76 to 77 (FT), R82, K83, and Q105. Positions 123, 127, and 131 each coordinate substrate. Residues 140–141 (QS) and W184 each bind FMN. Residue 190–192 (RLH) participates in substrate binding. R194 lines the FMN pocket.

Belongs to the pyridoxamine 5'-phosphate oxidase family. In terms of assembly, homodimer. Requires FMN as cofactor.

It catalyses the reaction pyridoxamine 5'-phosphate + O2 + H2O = pyridoxal 5'-phosphate + H2O2 + NH4(+). The catalysed reaction is pyridoxine 5'-phosphate + O2 = pyridoxal 5'-phosphate + H2O2. It functions in the pathway cofactor metabolism; pyridoxal 5'-phosphate salvage; pyridoxal 5'-phosphate from pyridoxamine 5'-phosphate: step 1/1. Its pathway is cofactor metabolism; pyridoxal 5'-phosphate salvage; pyridoxal 5'-phosphate from pyridoxine 5'-phosphate: step 1/1. Its function is as follows. Catalyzes the oxidation of either pyridoxine 5'-phosphate (PNP) or pyridoxamine 5'-phosphate (PMP) into pyridoxal 5'-phosphate (PLP). The chain is Pyridoxine/pyridoxamine 5'-phosphate oxidase from Cupriavidus necator (strain ATCC 17699 / DSM 428 / KCTC 22496 / NCIMB 10442 / H16 / Stanier 337) (Ralstonia eutropha).